A 101-amino-acid chain; its full sequence is 2-amino-4-ketopentanoate thiolase alpha subunit (101 aa).

It belongs to the OrtA family. In terms of assembly, heterodimer with OrtB.

The catalysed reaction is D-alanine + acetyl-CoA = (2R)-2-amino-4-oxopentanoate + CoA. Its function is as follows. Involved in the ornithine fermentation pathway. Catalyzes the thiolytic cleavage of 2-amino-4-ketopentanoate (AKP) with coenzyme A (CoA) to form acetyl-CoA and alanine. It is strictly specific for AKP. The protein is 2-amino-4-ketopentanoate thiolase alpha subunit of Unknown prokaryotic organism.